A 345-amino-acid chain; its full sequence is Phosphoribosylformylglycinamidine cyclo-ligase (345 aa).

This sequence belongs to the AIR synthase family.

It is found in the cytoplasm. The catalysed reaction is 2-formamido-N(1)-(5-O-phospho-beta-D-ribosyl)acetamidine + ATP = 5-amino-1-(5-phospho-beta-D-ribosyl)imidazole + ADP + phosphate + H(+). Its pathway is purine metabolism; IMP biosynthesis via de novo pathway; 5-amino-1-(5-phospho-D-ribosyl)imidazole from N(2)-formyl-N(1)-(5-phospho-D-ribosyl)glycinamide: step 2/2. This Shewanella sediminis (strain HAW-EB3) protein is Phosphoribosylformylglycinamidine cyclo-ligase.